Reading from the N-terminus, the 440-residue chain is tRNA-2-methylthio-N(6)-dimethylallyladenosine synthase (440 aa).

An MTTase N-terminal domain is found at 2–117; that stretch reads KGLYIKTYGC…LPELIVKASR (116 aa). Positions 11, 47, 80, 157, 161, and 164 each coordinate [4Fe-4S] cluster. In terms of domain architecture, Radical SAM core spans 143-374; it reads NSQGSSAFLA…QELISKQQLE (232 aa). The TRAM domain occupies 377–440; the sequence is QSMIGKTIPV…RQNSLLGCAA (64 aa).

The protein belongs to the methylthiotransferase family. MiaB subfamily. Monomer. [4Fe-4S] cluster serves as cofactor.

Its subcellular location is the cytoplasm. The enzyme catalyses N(6)-dimethylallyladenosine(37) in tRNA + (sulfur carrier)-SH + AH2 + 2 S-adenosyl-L-methionine = 2-methylsulfanyl-N(6)-dimethylallyladenosine(37) in tRNA + (sulfur carrier)-H + 5'-deoxyadenosine + L-methionine + A + S-adenosyl-L-homocysteine + 2 H(+). Functionally, catalyzes the methylthiolation of N6-(dimethylallyl)adenosine (i(6)A), leading to the formation of 2-methylthio-N6-(dimethylallyl)adenosine (ms(2)i(6)A) at position 37 in tRNAs that read codons beginning with uridine. The protein is tRNA-2-methylthio-N(6)-dimethylallyladenosine synthase of Wolbachia pipientis subsp. Culex pipiens (strain wPip).